Here is a 773-residue protein sequence, read N- to C-terminus: Immunoglobulin domain and leucine-rich repeat-containing protein 2 (773 aa).

Residues 1-20 (MRKFVFFVVAILIQIHTTTS) form the signal peptide. At 21–493 (QRNRSSSPSG…DWYSYDVFNS (473 aa)) the chain is on the extracellular side. LRR repeat units follow at residues 52 to 73 (TRNI…KIYG), 74 to 96 (SNIQ…IFAP), 97 to 120 (FPQL…VIHP), 122 to 144 (LKVL…LLSI), 145 to 167 (FPKI…DTSN), and 168 to 191 (TKLK…TLRV). A glycan (N-linked (GlcNAc...) asparagine) is linked at Asn-114. N-linked (GlcNAc...) asparagine glycosylation is present at Asn-204. 4 LRR repeats span residues 206–230 (STKL…DWKF), 233–251 (LRSL…QLDA), 252–275 (PLLN…ILTP), and 296–319 (PSTV…FIPM). The Ig-like domain maps to 349 to 479 (PVYAQTSIRK…GKDYGIYHFR (131 aa)). N-linked (GlcNAc...) asparagine glycosylation is found at Asn-361 and Asn-379. An intrachain disulfide couples Cys-396 to Cys-463. The chain crosses the membrane as a helical span at residues 494–514 (VFWGGLATSLIVCLISFLLNI). The Cytoplasmic portion of the chain corresponds to 515 to 773 (TWILTRKSAL…RSPDSPPEKR (259 aa)). The disordered stretch occupies residues 725–773 (VRPGIIPTNAPSIRFTTKPTTSSISNEASTSSPSSSGAHRSPDSPPEKR). Residues 733 to 745 (NAPSIRFTTKPTT) show a composition bias toward polar residues. Low complexity predominate over residues 746–763 (SSISNEASTSSPSSSGAH). Basic and acidic residues predominate over residues 764–773 (RSPDSPPEKR).

It localises to the membrane. The protein is Immunoglobulin domain and leucine-rich repeat-containing protein 2 of Caenorhabditis elegans.